A 66-amino-acid chain; its full sequence is Phylloseptin-S6 (66 aa).

The first 22 residues, 1–22 (MAFLKKSLFLVLFLGLVSLSIC), serve as a signal peptide directing secretion. A propeptide spanning residues 23–46 (EEEKRETEEEEHDQEEDDKSEEKR) is cleaved from the precursor. Residues 25–44 (EKRETEEEEHDQEEDDKSEE) form a disordered region. Residues 30–41 (EEEEHDQEEDDK) show a composition bias toward acidic residues. At Leu-65 the chain carries Leucine amide.

This sequence belongs to the frog skin active peptide (FSAP) family. Phylloseptin subfamily. As to expression, expressed by the skin glands.

The protein localises to the secreted. The protein resides in the target cell membrane. In terms of biological role, antimicrobial peptide with high activity against Gram-positive bacteria, low activity against Gram-negative bacteria, and moderate activity against fungi. Acts by causing bacterial membrane disruption inducing leakage of the intracellular content followed by cell death. It adopts an alpha-helical amphipathic structure in membrane environments. Also shows highly potent antiparasitic activity against Leishmania species. Shows moderate hemolytic activity on human erythrocytes. Is also active on human monocytes. In Phyllomedusa sauvagei (Sauvage's leaf frog), this protein is Phylloseptin-S6.